Reading from the N-terminus, the 404-residue chain is Cysteine desulfurase IscS (404 aa).

Residues A75–T76, N155, Q183, and S203–H205 contribute to the pyridoxal 5'-phosphate site. K206 is subject to N6-(pyridoxal phosphate)lysine. Residue T243 coordinates pyridoxal 5'-phosphate. C328 acts as the Cysteine persulfide intermediate in catalysis. C328 is a binding site for [2Fe-2S] cluster.

This sequence belongs to the class-V pyridoxal-phosphate-dependent aminotransferase family. NifS/IscS subfamily. As to quaternary structure, homodimer. Forms a heterotetramer with IscU, interacts with other sulfur acceptors. It depends on pyridoxal 5'-phosphate as a cofactor.

The protein localises to the cytoplasm. It catalyses the reaction (sulfur carrier)-H + L-cysteine = (sulfur carrier)-SH + L-alanine. Its pathway is cofactor biosynthesis; iron-sulfur cluster biosynthesis. Its function is as follows. Master enzyme that delivers sulfur to a number of partners involved in Fe-S cluster assembly, tRNA modification or cofactor biosynthesis. Catalyzes the removal of elemental sulfur atoms from cysteine to produce alanine. Functions as a sulfur delivery protein for Fe-S cluster synthesis onto IscU, an Fe-S scaffold assembly protein, as well as other S acceptor proteins. The polypeptide is Cysteine desulfurase IscS (Pseudomonas putida (strain W619)).